The primary structure comprises 857 residues: Alanine--tRNA ligase (857 aa).

Zn(2+) contacts are provided by His556, His560, Cys658, and His662.

It belongs to the class-II aminoacyl-tRNA synthetase family. Requires Zn(2+) as cofactor.

The protein resides in the cytoplasm. It carries out the reaction tRNA(Ala) + L-alanine + ATP = L-alanyl-tRNA(Ala) + AMP + diphosphate. In terms of biological role, catalyzes the attachment of alanine to tRNA(Ala) in a two-step reaction: alanine is first activated by ATP to form Ala-AMP and then transferred to the acceptor end of tRNA(Ala). Also edits incorrectly charged Ser-tRNA(Ala) and Gly-tRNA(Ala) via its editing domain. This chain is Alanine--tRNA ligase, found in Sulfurovum sp. (strain NBC37-1).